A 700-amino-acid chain; its full sequence is non-specific serine/threonine protein kinase Cdc7 (700 aa).

A Protein kinase domain is found at 127 to 644 (FDVHSRIGNG…AEEALKHPFF (518 aa)). ATP-binding positions include 133-141 (IGNGTFSTV) and K163. D250 acts as the Proton acceptor in catalysis.

Belongs to the protein kinase superfamily. Ser/Thr protein kinase family. In terms of assembly, component of the Dbf4-dependent kinase (DDK) complex consisting of Cdc7 and the Dbf4 ortholog chif. Interacts with chif (via the processed polypeptide Chiffon-A); the interaction is direct.

The catalysed reaction is L-seryl-[protein] + ATP = O-phospho-L-seryl-[protein] + ADP + H(+). It catalyses the reaction L-threonyl-[protein] + ATP = O-phospho-L-threonyl-[protein] + ADP + H(+). Its activity is regulated as follows. Activated by chif. Inhibited by the synthetic compound XL413. Catalytic component of the Dbf4-dependent kinase (DDK) complex. Phosphorylates components of the pre-replication complex, including Mcm2 and, to a lesser extent, Mcm4. Phosphorylates histones, including H3 and H2B. Required for DNA replication and mitotic proliferation, including during the endoreplication and amplification stages of DNA replication in egg chamber follicle cells of the ovary. This chain is non-specific serine/threonine protein kinase Cdc7, found in Drosophila melanogaster (Fruit fly).